A 168-amino-acid polypeptide reads, in one-letter code: Cilia- and flagella-associated protein 276 (168 aa).

Disordered regions lie at residues 35-61 and 149-168; these read AHLAQQQDPWSRLSSTPTATSRSRDTF and HTAATNGGYSRKNDGGFFST. Over residues 38–55 the composition is skewed to polar residues; it reads AQQQDPWSRLSSTPTATS.

As to quaternary structure, microtubule inner protein component of sperm flagellar doublet microtubules. In terms of tissue distribution, predominantly expressed in nervous system tissues, such as the spinal cord, cerebrum, cerebellum, and sciatic nerve.

It localises to the cytoplasm. It is found in the cytoskeleton. The protein localises to the cilium axoneme. The protein resides in the flagellum axoneme. Microtubule inner protein (MIP) part of the dynein-decorated doublet microtubules (DMTs) in cilia axoneme, which is required for motile cilia beating. May play an important role for the maintenance of myelin-axon integrity. May affect intracellular Ca(2+) homeostasis. The sequence is that of Cilia- and flagella-associated protein 276 from Mus musculus (Mouse).